Consider the following 345-residue polypeptide: UDP-N-acetylenolpyruvoylglucosamine reductase (345 aa).

An FAD-binding PCMH-type domain is found at 59-254 (VGGPAACLAR…RKATQPLGRP (196 aa)). R209 is an active-site residue. The active-site Proton donor is C258. E328 is a catalytic residue.

This sequence belongs to the MurB family. Requires FAD as cofactor.

The protein localises to the cytoplasm. The catalysed reaction is UDP-N-acetyl-alpha-D-muramate + NADP(+) = UDP-N-acetyl-3-O-(1-carboxyvinyl)-alpha-D-glucosamine + NADPH + H(+). Its pathway is cell wall biogenesis; peptidoglycan biosynthesis. In terms of biological role, cell wall formation. This chain is UDP-N-acetylenolpyruvoylglucosamine reductase, found in Syntrophobacter fumaroxidans (strain DSM 10017 / MPOB).